The chain runs to 110 residues: Protein RnfH (110 aa).

The tract at residues 86-110 is disordered; it reads RQRRVEKTRKAGSIEGRRWQNKDSR. The span at 100-110 shows a compositional bias: basic and acidic residues; sequence EGRRWQNKDSR.

The protein belongs to the UPF0125 (RnfH) family.

In Paraburkholderia xenovorans (strain LB400), this protein is Protein RnfH.